The following is a 444-amino-acid chain: N-succinylarginine dihydrolase (444 aa).

Residues 19–28 (AGLSFGNVAS), Asn-110, and 137–138 (HR) contribute to the substrate site. Glu-174 is an active-site residue. Arg-214 contacts substrate. His-250 is a catalytic residue. The substrate site is built by Asp-252 and Asn-362. Cys-368 functions as the Nucleophile in the catalytic mechanism.

The protein belongs to the succinylarginine dihydrolase family. In terms of assembly, homodimer.

It catalyses the reaction N(2)-succinyl-L-arginine + 2 H2O + 2 H(+) = N(2)-succinyl-L-ornithine + 2 NH4(+) + CO2. Its pathway is amino-acid degradation; L-arginine degradation via AST pathway; L-glutamate and succinate from L-arginine: step 2/5. Its function is as follows. Catalyzes the hydrolysis of N(2)-succinylarginine into N(2)-succinylornithine, ammonia and CO(2). The sequence is that of N-succinylarginine dihydrolase from Shewanella putrefaciens (strain CN-32 / ATCC BAA-453).